Reading from the N-terminus, the 206-residue chain is Alpha-amylase/trypsin inhibitor (206 aa).

8 disulfides stabilise this stretch: Cys-9–Cys-205, Cys-51–Cys-61, Cys-66–Cys-72, Cys-118–Cys-194, Cys-124–Cys-177, Cys-132–Cys-142, Cys-146–Cys-155, and Cys-156–Cys-164.

The protein belongs to the thaumatin family.

Functionally, inhibits both trypsin and alpha-amylase. Inhibits the growth of some plant fungal pathogens. The sequence is that of Alpha-amylase/trypsin inhibitor from Zea mays (Maize).